Here is a 135-residue protein sequence, read N- to C-terminus: Lymphocyte antigen 6B (135 aa).

Residues 1 to 26 (MNRSCAMKSCVLILLLALLCAERAQG) form the signal peptide. The UPAR/Ly6 domain maps to 27–119 (LNCYNCTMIP…PTGGSTWTMA (93 aa)). Intrachain disulfides connect Cys29–Cys54, Cys32–Cys41, Cys47–Cys75, Cys79–Cys99, and Cys100–Cys105. Gly113 carries GPI-anchor amidated glycine lipidation. Positions 114–135 (STWTMAGVLLFILGSVLLQTLL) are cleaved as a propeptide — removed in mature form.

It localises to the cell membrane. In Rattus norvegicus (Rat), this protein is Lymphocyte antigen 6B (Ly6b).